We begin with the raw amino-acid sequence, 77 residues long: Protein IDA (77 aa).

A signal peptide spans 1–26 (MAPCRTMMVLLCFVLFLAASSSCVAA). The tract at residues 56–69 (GVPIPPSAPSKRHN) is RLK5-binding.

In terms of assembly, interaction with RLK5. In terms of tissue distribution, expressed specifically in the floral abscission zone.

It is found in the secreted. The protein resides in the extracellular space. Its function is as follows. Involved in an ethylene-independent separation step of floral abscission. Promotes abscission zone (AZ) cells rounding. May act with RLK5 and HSL2 as ligand-receptor pairs. The sequence is that of Protein IDA from Arabidopsis thaliana (Mouse-ear cress).